The chain runs to 527 residues: GMP synthase [glutamine-hydrolyzing] (527 aa).

Positions 20-208 constitute a Glutamine amidotransferase type-1 domain; it reads SVVILDYGSQ…LFDVCGCAPT (189 aa). Residue Cys97 is the Nucleophile of the active site. Residues His182 and Glu184 contribute to the active site. Residues 209-402 form the GMPS ATP-PPase domain; sequence WTAESFVEQA…LGLPEEIVQR (194 aa). Residue 236-242 participates in ATP binding; that stretch reads SGGVDSS.

As to quaternary structure, homodimer.

It carries out the reaction XMP + L-glutamine + ATP + H2O = GMP + L-glutamate + AMP + diphosphate + 2 H(+). Its pathway is purine metabolism; GMP biosynthesis; GMP from XMP (L-Gln route): step 1/1. Catalyzes the synthesis of GMP from XMP. The polypeptide is GMP synthase [glutamine-hydrolyzing] (Thermomicrobium roseum (strain ATCC 27502 / DSM 5159 / P-2)).